The chain runs to 880 residues: Alanine--tRNA ligase (880 aa).

Residues His565, His569, Cys675, and His679 each coordinate Zn(2+).

It belongs to the class-II aminoacyl-tRNA synthetase family. It depends on Zn(2+) as a cofactor.

Its subcellular location is the cytoplasm. The catalysed reaction is tRNA(Ala) + L-alanine + ATP = L-alanyl-tRNA(Ala) + AMP + diphosphate. Catalyzes the attachment of alanine to tRNA(Ala) in a two-step reaction: alanine is first activated by ATP to form Ala-AMP and then transferred to the acceptor end of tRNA(Ala). Also edits incorrectly charged Ser-tRNA(Ala) and Gly-tRNA(Ala) via its editing domain. The protein is Alanine--tRNA ligase of Granulibacter bethesdensis (strain ATCC BAA-1260 / CGDNIH1).